The sequence spans 360 residues: Spermidine/putrescine-binding periplasmic protein 1 (360 aa).

The signal sequence occupies residues 1 to 16 (MKKFAGLITASFVAAT).

The protein belongs to the bacterial solute-binding protein PotD/PotF family.

The protein localises to the periplasm. Its function is as follows. Required for the activity of the bacterial periplasmic transport system of putrescine and spermidine. Polyamine binding protein. The polypeptide is Spermidine/putrescine-binding periplasmic protein 1 (potD-B) (Haemophilus influenzae (strain ATCC 51907 / DSM 11121 / KW20 / Rd)).